A 353-amino-acid polypeptide reads, in one-letter code: Protein RecA (353 aa).

67–74 (GPESSGKT) is an ATP binding site. Positions 330-353 (SNPNSTPDFSVDDSEGVAETNEDF) are disordered. Over residues 339 to 353 (SVDDSEGVAETNEDF) the composition is skewed to acidic residues.

The protein belongs to the RecA family.

Its subcellular location is the cytoplasm. Its function is as follows. Can catalyze the hydrolysis of ATP in the presence of single-stranded DNA, the ATP-dependent uptake of single-stranded DNA by duplex DNA, and the ATP-dependent hybridization of homologous single-stranded DNAs. It interacts with LexA causing its activation and leading to its autocatalytic cleavage. The chain is Protein RecA from Escherichia coli O157:H7 (strain EC4115 / EHEC).